The following is a 584-amino-acid chain: uncharacterized protein (584 aa).

Residues 15–35 (FIFFVLVFFICIIFGCIYESL) traverse the membrane as a helical segment. 2 stretches are compositionally biased toward polar residues: residues 184–194 (DVSTENSYTHN) and 204–225 (GKRT…SYNI). The disordered stretch occupies residues 184-226 (DVSTENSYTHNNSRDDEPQNGKRTYNNQSNNNLPYDNSSYNIS). Coiled coils occupy residues 267 to 319 (DNYP…DNYP) and 436 to 477 (RDNH…HYKR).

The protein resides in the membrane. This is an uncharacterized protein from Plasmodium falciparum (isolate 3D7).